Reading from the N-terminus, the 221-residue chain is Uracil-DNA glycosylase (221 aa).

The active-site Proton acceptor is the aspartate 65.

This sequence belongs to the uracil-DNA glycosylase (UDG) superfamily. UNG family.

It is found in the cytoplasm. The catalysed reaction is Hydrolyzes single-stranded DNA or mismatched double-stranded DNA and polynucleotides, releasing free uracil.. Functionally, excises uracil residues from the DNA which can arise as a result of misincorporation of dUMP residues by DNA polymerase or due to deamination of cytosine. The chain is Uracil-DNA glycosylase from Flavobacterium johnsoniae (strain ATCC 17061 / DSM 2064 / JCM 8514 / BCRC 14874 / CCUG 350202 / NBRC 14942 / NCIMB 11054 / UW101) (Cytophaga johnsonae).